The chain runs to 229 residues: 2-C-methyl-D-erythritol 4-phosphate cytidylyltransferase (229 aa).

Belongs to the IspD/TarI cytidylyltransferase family. IspD subfamily. Homodimer.

It carries out the reaction 2-C-methyl-D-erythritol 4-phosphate + CTP + H(+) = 4-CDP-2-C-methyl-D-erythritol + diphosphate. It functions in the pathway isoprenoid biosynthesis; isopentenyl diphosphate biosynthesis via DXP pathway; isopentenyl diphosphate from 1-deoxy-D-xylulose 5-phosphate: step 2/6. Its function is as follows. Catalyzes the formation of 4-diphosphocytidyl-2-C-methyl-D-erythritol from CTP and 2-C-methyl-D-erythritol 4-phosphate (MEP). In Wigglesworthia glossinidia brevipalpis, this protein is 2-C-methyl-D-erythritol 4-phosphate cytidylyltransferase.